Here is a 321-residue protein sequence, read N- to C-terminus: Lipoyl synthase (321 aa).

Cys68, Cys73, Cys79, Cys94, Cys98, Cys101, and Ser308 together coordinate [4Fe-4S] cluster. Positions 80–297 (FNHGTATFMI…KAEAMAMGFT (218 aa)) constitute a Radical SAM core domain.

This sequence belongs to the radical SAM superfamily. Lipoyl synthase family. [4Fe-4S] cluster serves as cofactor.

Its subcellular location is the cytoplasm. The enzyme catalyses [[Fe-S] cluster scaffold protein carrying a second [4Fe-4S](2+) cluster] + N(6)-octanoyl-L-lysyl-[protein] + 2 oxidized [2Fe-2S]-[ferredoxin] + 2 S-adenosyl-L-methionine + 4 H(+) = [[Fe-S] cluster scaffold protein] + N(6)-[(R)-dihydrolipoyl]-L-lysyl-[protein] + 4 Fe(3+) + 2 hydrogen sulfide + 2 5'-deoxyadenosine + 2 L-methionine + 2 reduced [2Fe-2S]-[ferredoxin]. It participates in protein modification; protein lipoylation via endogenous pathway; protein N(6)-(lipoyl)lysine from octanoyl-[acyl-carrier-protein]: step 2/2. In terms of biological role, catalyzes the radical-mediated insertion of two sulfur atoms into the C-6 and C-8 positions of the octanoyl moiety bound to the lipoyl domains of lipoate-dependent enzymes, thereby converting the octanoylated domains into lipoylated derivatives. The sequence is that of Lipoyl synthase from Enterobacter sp. (strain 638).